Here is a 115-residue protein sequence, read N- to C-terminus: Large ribosomal subunit protein bL19 (115 aa).

The protein belongs to the bacterial ribosomal protein bL19 family.

Functionally, this protein is located at the 30S-50S ribosomal subunit interface and may play a role in the structure and function of the aminoacyl-tRNA binding site. The protein is Large ribosomal subunit protein bL19 of Leifsonia xyli subsp. xyli (strain CTCB07).